A 320-amino-acid chain; its full sequence is Putative S-adenosyl-L-methionine-dependent methyltransferase MAP_4078 (320 aa).

S-adenosyl-L-methionine is bound by residues Asp132 and 161-162; that span reads DL. Positions 294–320 are disordered; sequence PPHDIEDAIPQTRFVAAQRTERTRPDR.

The protein belongs to the UPF0677 family.

Its function is as follows. Exhibits S-adenosyl-L-methionine-dependent methyltransferase activity. This is Putative S-adenosyl-L-methionine-dependent methyltransferase MAP_4078 from Mycolicibacterium paratuberculosis (strain ATCC BAA-968 / K-10) (Mycobacterium paratuberculosis).